The sequence spans 473 residues: PTS system trehalose-specific EIIBC component (473 aa).

Residues 1–89 form the PTS EIIB type-1 domain; sequence MMSKINQTDI…IASTGQAQVD (89 aa). Topologically, residues 1–110 are cytoplasmic; it reads MMSKINQTDI…MKWHEQLISH (110 aa). Residue cysteine 29 is the Phosphocysteine intermediate; for EIIB activity of the active site. Cysteine 29 is modified (phosphocysteine; by EIIA). Positions 109–473 constitute a PTS EIIC type-1 domain; it reads SHFAVIFFPL…KYRLGTLDIV (365 aa). Residues 111-131 form a helical membrane-spanning segment; it reads FAVIFFPLLPALISGGLILGF. Over 132-158 the chain is Periplasmic; that stretch reads RNVIGDLPMSNGQTLAQMYPSLQTIYD. A helical transmembrane segment spans residues 159–179; the sequence is FLWLIGEAIFFYLPVGICWSA. Residues 180-187 are Cytoplasmic-facing; that stretch reads VKKMGGTP. The chain crosses the membrane as a helical span at residues 188–208; it reads ILGIVLGVTLVSPQLMNAYLL. Residues 209-225 lie on the Periplasmic side of the membrane; the sequence is GQQLPEVWDFGMFSIAK. A helical transmembrane segment spans residues 226–246; it reads VGYQAQVIPALLAGLALGVIE. Topologically, residues 247–258 are cytoplasmic; sequence TRLKRIVPDYLY. A helical transmembrane segment spans residues 259 to 279; that stretch reads LVVVPVCSLILAVFLAHALIG. Over 280–300 the chain is Periplasmic; it reads PFGRMIGDGVAFAVRHLMTGS. The helical transmembrane segment at 301–321 threads the bilayer; that stretch reads FAPIGAALFGFLYAPLVITGV. Residues 322–340 lie on the Cytoplasmic side of the membrane; that stretch reads HQTTLAIDLQMIQSMGGTP. Residues 341 to 361 traverse the membrane as a helical segment; sequence VWPLIALSNIAQGSAVIGIII. Residues 362–370 lie on the Periplasmic side of the membrane; that stretch reads SSRKHNERE. A helical transmembrane segment spans residues 371 to 391; the sequence is ISVPAAISAWLGVTEPAMYGI. The Cytoplasmic segment spans residues 392–398; that stretch reads NLKYRFP. The chain crosses the membrane as a helical span at residues 399 to 419; it reads MLCAMIGSGLAGLLCGLNGVM. Topologically, residues 420 to 440 are periplasmic; it reads ANGIGVGGLPGILSIQPSYWQ. A helical transmembrane segment spans residues 441 to 461; it reads VFALAMAIAIIIPIVLTSFIY. The Cytoplasmic segment spans residues 462–473; sequence QRKYRLGTLDIV.

The protein localises to the cell inner membrane. The enzyme catalyses alpha,alpha-trehalose(out) + N(pros)-phospho-L-histidyl-[protein] = alpha,alpha-trehalose 6-phosphate(in) + L-histidyl-[protein]. The phosphoenolpyruvate-dependent sugar phosphotransferase system (sugar PTS), a major carbohydrate active transport system, catalyzes the phosphorylation of incoming sugar substrates concomitantly with their translocation across the cell membrane. This system is involved in trehalose transport at low osmolarity. The sequence is that of PTS system trehalose-specific EIIBC component (treB) from Escherichia coli (strain K12).